The chain runs to 204 residues: MEWSLAEDDALAYSPLFLPNFRPFPMRVYLTGFMASGKSTVGPEAAARLGQPFLDLDRLITAHAGRSIPALFAEEGEARFRELERDLLRRTATTDDLVVALGGGALLDDANRAFAKEHGLVLYLEAPVDTLLGRVTGDDTRRPLLEDDTGTRLPRDEQRTRIEAMLDERRPAYEAAHHTLDADRPVEEVVGRIVEVVTAQAEPA.

Residue Ala35 to Thr40 coordinates ATP. Mg(2+) is bound at residue Ser39. Residues Asp57, Arg81, and Gly103 each contribute to the substrate site. ATP is bound at residue Arg142. Arg169 provides a ligand contact to substrate.

This sequence belongs to the shikimate kinase family. As to quaternary structure, monomer. Mg(2+) serves as cofactor.

It is found in the cytoplasm. The enzyme catalyses shikimate + ATP = 3-phosphoshikimate + ADP + H(+). It participates in metabolic intermediate biosynthesis; chorismate biosynthesis; chorismate from D-erythrose 4-phosphate and phosphoenolpyruvate: step 5/7. In terms of biological role, catalyzes the specific phosphorylation of the 3-hydroxyl group of shikimic acid using ATP as a cosubstrate. In Salinibacter ruber (strain DSM 13855 / M31), this protein is Shikimate kinase.